Consider the following 228-residue polypeptide: N-acylneuraminate cytidylyltransferase (228 aa).

This sequence belongs to the CMP-NeuNAc synthase family.

The protein localises to the cytoplasm. The enzyme catalyses an N-acylneuraminate + CTP = a CMP-N-acyl-beta-neuraminate + diphosphate. This chain is N-acylneuraminate cytidylyltransferase (neuA), found in Neisseria meningitidis serogroup B (strain ATCC BAA-335 / MC58).